A 196-amino-acid chain; its full sequence is Hibernation-associated plasma protein HP-20 (196 aa).

The N-terminal stretch at 1-23 (MTDVWRLAIFVLMVNVLNDQVSC) is a signal peptide. The region spanning 25–63 (GPPGPVGYPGVPGVPGPRGPPGQPGAAGRPGDPGPKGPS) is the Collagen-like domain. The span at 28-47 (GPVGYPGVPGVPGPRGPPGQ) shows a compositional bias: pro residues. Residues 28 to 64 (GPVGYPGVPGVPGPRGPPGQPGAAGRPGDPGPKGPSV) form a disordered region. Residues 67-196 (PCRERSAFTV…IYFSGFLISS (130 aa)) enclose the C1q domain.

In terms of tissue distribution, plasma; synthesized in the liver.

Its subcellular location is the secreted. Functionally, plasma proteins HP-20, HP-25, HP-27 and HP-55 form a 140 kDa complex via disulfide bonds in the plasma and are hibernation specific. The protein is Hibernation-associated plasma protein HP-20 of Tamias sibiricus (Siberian chipmunk).